The sequence spans 261 residues: Adenosylcobinamide-GDP ribazoletransferase (261 aa).

Transmembrane regions (helical) follow at residues 4–26, 40–60, 62–82, 110–130, 140–160, 197–217, and 237–257; these read GLNGLLLAFQFLTTVPITRQIPW, LTGLVLGGLLVSLYLLLSPFL, PLVLAALLVTLSIFYSGGLHL, VGAFAVMTTILLIGWKVLLLM, FTWLLLLVPVCLRWMIIVQLI, CFLLLQNVILTLCFLLMIWLF, and IGASIEGGELFLWGIMWTFFL.

Belongs to the CobS family. Mg(2+) is required as a cofactor.

It localises to the cell membrane. It carries out the reaction alpha-ribazole + adenosylcob(III)inamide-GDP = adenosylcob(III)alamin + GMP + H(+). The enzyme catalyses alpha-ribazole 5'-phosphate + adenosylcob(III)inamide-GDP = adenosylcob(III)alamin 5'-phosphate + GMP + H(+). Its pathway is cofactor biosynthesis; adenosylcobalamin biosynthesis; adenosylcobalamin from cob(II)yrinate a,c-diamide: step 7/7. Functionally, joins adenosylcobinamide-GDP and alpha-ribazole to generate adenosylcobalamin (Ado-cobalamin). Also synthesizes adenosylcobalamin 5'-phosphate from adenosylcobinamide-GDP and alpha-ribazole 5'-phosphate. In Halalkalibacterium halodurans (strain ATCC BAA-125 / DSM 18197 / FERM 7344 / JCM 9153 / C-125) (Bacillus halodurans), this protein is Adenosylcobinamide-GDP ribazoletransferase.